We begin with the raw amino-acid sequence, 238 residues long: Ribonuclease 3 (238 aa).

Residues 11 to 136 (RARLEAAIGY…LIAAIYLDGG (126 aa)) enclose the RNase III domain. Mg(2+) is bound at residue E49. The active site involves D53. Mg(2+) contacts are provided by D122 and E125. The active site involves E125. Residues 161–230 (DAKTELQEWA…AMKLLEREGV (70 aa)) enclose the DRBM domain.

Belongs to the ribonuclease III family. In terms of assembly, homodimer. It depends on Mg(2+) as a cofactor.

It is found in the cytoplasm. The catalysed reaction is Endonucleolytic cleavage to 5'-phosphomonoester.. Functionally, digests double-stranded RNA. Involved in the processing of primary rRNA transcript to yield the immediate precursors to the large and small rRNAs (23S and 16S). Processes some mRNAs, and tRNAs when they are encoded in the rRNA operon. Processes pre-crRNA and tracrRNA of type II CRISPR loci if present in the organism. The polypeptide is Ribonuclease 3 (Rhizobium meliloti (strain 1021) (Ensifer meliloti)).